The primary structure comprises 144 residues: MRLNTLSPAAGSKSAPKRVGRGIGSGLGKTAGRGHKGQKSRSGGGVRVGFEGGQMPLKIRLPKFGFTSRRALVTAEVRLLELAKVNGDVVDLNALKDANVITRNIQFAKIVLSGTIDRPVTVKGLKVTKGARAAIEAAGGKIEE.

The interval 1-49 is disordered; it reads MRLNTLSPAAGSKSAPKRVGRGIGSGLGKTAGRGHKGQKSRSGGGVRVG. The span at 21 to 31 shows a compositional bias: gly residues; that stretch reads RGIGSGLGKTA.

It belongs to the universal ribosomal protein uL15 family. In terms of assembly, part of the 50S ribosomal subunit.

In terms of biological role, binds to the 23S rRNA. The polypeptide is Large ribosomal subunit protein uL15 (Shewanella frigidimarina (strain NCIMB 400)).